Reading from the N-terminus, the 310-residue chain is ADP-L-glycero-D-manno-heptose-6-epimerase (310 aa).

Residues 10-11, 31-32, lysine 38, lysine 53, 75-79, and asparagine 92 contribute to the NADP(+) site; these read FI, DN, and EGACS. Tyrosine 140 acts as the Proton acceptor in catalysis. Lysine 144 provides a ligand contact to NADP(+). Position 169 (asparagine 169) interacts with substrate. The NADP(+) site is built by valine 170 and lysine 178. Catalysis depends on lysine 178, which acts as the Proton acceptor. Residues serine 180, histidine 187, 201-204, arginine 209, and tyrosine 272 contribute to the substrate site; that span reads FEGS.

The protein belongs to the NAD(P)-dependent epimerase/dehydratase family. HldD subfamily. As to quaternary structure, homopentamer. The cofactor is NADP(+).

It carries out the reaction ADP-D-glycero-beta-D-manno-heptose = ADP-L-glycero-beta-D-manno-heptose. Its pathway is nucleotide-sugar biosynthesis; ADP-L-glycero-beta-D-manno-heptose biosynthesis; ADP-L-glycero-beta-D-manno-heptose from D-glycero-beta-D-manno-heptose 7-phosphate: step 4/4. Its function is as follows. Catalyzes the interconversion between ADP-D-glycero-beta-D-manno-heptose and ADP-L-glycero-beta-D-manno-heptose via an epimerization at carbon 6 of the heptose. The chain is ADP-L-glycero-D-manno-heptose-6-epimerase from Salmonella heidelberg (strain SL476).